Here is a 1476-residue protein sequence, read N- to C-terminus: ABC-type transporter FG02316 (1476 aa).

The N-linked (GlcNAc...) asparagine glycan is linked to asparagine 2. The next 10 membrane-spanning stretches (helical) occupy residues 23–43 (FTLLFEESILVVPITALLLLA), 64–84 (WLYCKIILCLLLLASQIAFLV), 97–117 (SLPAAALSIVASITLLGLSYV), 156–176 (AAITALISTVVKILMLSAETI), 266–286 (ILFIIFPRLCFIGFTFCQPFL), 305–325 (QGYGLIGAWFLVFIGLAVTTG), 384–404 (VWANLIEIVIAVYLLGRQLGL), 407–427 (LIPVGAAIFSIVGSVIAVSFV), 485–505 (LLIWNMVLAYLAPIFAPVLSF), and 532–552 (LFALLQEPLASFVTSLSSFMG). The 279-residue stretch at 274–552 (LCFIGFTFCQ…FVTSLSSFMG (279 aa)) folds into the ABC transmembrane type-1 1 domain. The disordered stretch occupies residues 586–615 (ISGVSSSEEKHPVSPIQESMMKTEPSGDSP). The 226-residue stretch at 622–847 (IRNASFGYDR…SDNYVSHSDV (226 aa)) folds into the ABC transporter 1 domain. An N-linked (GlcNAc...) asparagine glycan is attached at asparagine 624. 654 to 661 (GPVGSGKS) provides a ligand contact to ATP. Asparagine 682, asparagine 696, asparagine 798, and asparagine 836 each carry an N-linked (GlcNAc...) asparagine glycan. The segment at 842-870 (VSHSDVSSPDGARSKAPSSGPASSSAPVP) is disordered. A compositionally biased stretch (low complexity) spans 855–870 (SKAPSSGPASSSAPVP). Transmembrane regions (helical) follow at residues 906–926 (MNAIGWIPTMVFVLAICAYIF), 950–970 (LGYYLGVYAMLGALSIIFLVL), 1021–1041 (LIDMDLPLSALNTFATFVLCI), 1045–1065 (ILIAVGSYYTAIAFPFLLATL), 1137–1157 (WLTLVLDMIVTIIAVLVVVLV), and 1167–1187 (GLIGVALVNIIQFSQHLKLLM). In terms of domain architecture, ABC transmembrane type-1 2 spans 916–1195 (VFVLAICAYI…LMTFWTTLET (280 aa)). Residues 1232–1464 (ILFDQVSAGY…GPDASTFASM (233 aa)) form the ABC transporter 2 domain. A glycan (N-linked (GlcNAc...) asparagine) is linked at asparagine 1250. Residue 1265 to 1272 (GRTGSGKS) participates in ATP binding. Residue asparagine 1414 is glycosylated (N-linked (GlcNAc...) asparagine).

This sequence belongs to the ABC transporter superfamily. ABCC family. Conjugate transporter (TC 3.A.1.208) subfamily.

It localises to the cell membrane. Its function is as follows. ABC-type transporter; part of the gene cluster that mediates the biosynthesis of the fusahexin, a cyclic hydrophobic hexapeptide with the amino acid sequence cyclo-(D-Ala-L-Leu-D-allo-Thr-L-Pro-D-Leu-L-Leu) that plays an important role in cell surface hydrophobicity. The protein is ABC-type transporter FG02316 of Gibberella zeae (strain ATCC MYA-4620 / CBS 123657 / FGSC 9075 / NRRL 31084 / PH-1) (Wheat head blight fungus).